The sequence spans 618 residues: MSAYATQGFNLDDRGRRIVVDPVTRIEGHMRCEVNVDANNVIRNAVSTGTMWRGLEVILKGRDPRDAWAFVERICGVCTGCHALASVRAVENALDIRIPKNAHLIREIMAKTLQVHDHAVHFYHLHALDWVDVMSALKADPKRTSELQQLVSPAHPLSSAGYFRDIQNRLKRFVESGQLGPFMNGYWGSKAYVLPPEANLMAVTHYLEALDLQKEWVKIHTIFGGKNPHPNYLVGGVPCAINLDGIGAASAPVNMERLSFVKARIDEIIEFNKNVYVPDVLAIGTLYKQAGWLYGGGLAATNVLDYGEYPNVAYNKSTDQLPGGAILNGNWDEVFPVDPRDSQQVQEFVSHSWYKYADESVGLHPWDGVTEPNYVLGANTKGTRTRIEQIDESAKYSWIKSPRWRGHAMEVGPLSRYILAYAHARSGNKYAERPKEQLEYSAQMINSAIPKALGLPETQYTLKQLLPSTIGRTLARALESQYCGEMMHSDWHDLVANIRAGDTATANVDKWDPATWPLQAKGVGTVAAPRGALGHWIRIKDGRIENYQCVVPTTWNGSPRDYKGQIGAFEASLMNTPMVNPEQPVEILRTLHSFDPCLACSTHVMSAEGQELTTVKVR.

Ni(2+)-binding residues include Cys75, Cys78, Cys597, and Cys600.

It belongs to the [NiFe]/[NiFeSe] hydrogenase large subunit family. Heterodimer of a large and a small subunit. Ni(2+) serves as cofactor.

It is found in the cell membrane. The enzyme catalyses H2 + A = AH2. Functionally, this enzyme recycles the H(2) produced by nitrogenase to increase the production of ATP and to protect nitrogenase against inhibition or damage by O(2) under carbon- or phosphate-limited conditions. This Cupriavidus necator (strain ATCC 17699 / DSM 428 / KCTC 22496 / NCIMB 10442 / H16 / Stanier 337) (Ralstonia eutropha) protein is Uptake hydrogenase large subunit (hoxG).